Here is a 404-residue protein sequence, read N- to C-terminus: Argininosuccinate synthase (404 aa).

ATP-binding positions include 10-18 (AYSGGVDTS) and alanine 38. Position 89 (tyrosine 89) interacts with L-citrulline. An ATP-binding site is contributed by glycine 119. Positions 121, 125, and 126 each coordinate L-aspartate. Asparagine 125 provides a ligand contact to L-citrulline. 5 residues coordinate L-citrulline: arginine 129, serine 177, serine 186, glutamate 262, and tyrosine 274.

The protein belongs to the argininosuccinate synthase family. Type 1 subfamily. Homotetramer.

The protein resides in the cytoplasm. The enzyme catalyses L-citrulline + L-aspartate + ATP = 2-(N(omega)-L-arginino)succinate + AMP + diphosphate + H(+). It participates in amino-acid biosynthesis; L-arginine biosynthesis; L-arginine from L-ornithine and carbamoyl phosphate: step 2/3. The chain is Argininosuccinate synthase from Prochlorococcus marinus subsp. pastoris (strain CCMP1986 / NIES-2087 / MED4).